The chain runs to 288 residues: MSQFSFTKMHGLGNSYIYVNMFEEQIPEEDLALVAEKVSNINTGIGADGMILICPSDVAPVKMRMFNNDGSEGKSCGNGLRCVAKYAYEHKLVEDTVFTIETLAGIVTAEVTVEEGKVTLAKIDMGAPRLTRAEIPMLGEGETPFIRENFLYNNHRYAFTAVSMGNPHAVIFVDDVEQAPLTTLGPVLETHEMFPERVNVEFIEILNEEEMNFRVWERGSGVTQACGTGACAAVVASILNGKMERGKEITVHLAGGDLMIAWIEEGNVLMKGPAEVICHGVYEYKIEA.

Substrate is bound by residues asparagine 14 and asparagine 67. Cysteine 76 functions as the Proton donor in the catalytic mechanism. Residues 77 to 78, asparagine 166, asparagine 199, and 217 to 218 each bind substrate; these read GN and ER. Cysteine 226 acts as the Proton acceptor in catalysis. 227–228 is a binding site for substrate; it reads GT.

It belongs to the diaminopimelate epimerase family. Homodimer.

It localises to the cytoplasm. It catalyses the reaction (2S,6S)-2,6-diaminopimelate = meso-2,6-diaminopimelate. It participates in amino-acid biosynthesis; L-lysine biosynthesis via DAP pathway; DL-2,6-diaminopimelate from LL-2,6-diaminopimelate: step 1/1. In terms of biological role, catalyzes the stereoinversion of LL-2,6-diaminopimelate (L,L-DAP) to meso-diaminopimelate (meso-DAP), a precursor of L-lysine and an essential component of the bacterial peptidoglycan. The protein is Diaminopimelate epimerase of Bacillus cereus (strain AH820).